Consider the following 821-residue polypeptide: PX domain-containing protein C1450.12 (821 aa).

Positions 171 to 310 constitute a PX domain; sequence AYVLGVRQST…SFLTDDPVTL (140 aa). The segment at 235-271 is disordered; the sequence is KDDHDTYLNSSEDSTLSPLPSRSSDTNDPQSDSQHVL. Polar residues predominate over residues 241–268; the sequence is YLNSSEDSTLSPLPSRSSDTNDPQSDSQ. Phosphothreonine occurs at positions 260 and 597. Composition is skewed to acidic residues over residues 737 to 746 and 754 to 766; these read GDEDDQDEND and EHME…EEFD. The interval 737–766 is disordered; it reads GDEDDQDENDQVTKVEEEHMEDDDSVEEFD. The residue at position 761 (serine 761) is a Phosphoserine.

Its subcellular location is the mitochondrion membrane. The chain is PX domain-containing protein C1450.12 from Schizosaccharomyces pombe (strain 972 / ATCC 24843) (Fission yeast).